The sequence spans 505 residues: Ion-translocating oxidoreductase complex subunit C (505 aa).

2 4Fe-4S ferredoxin-type domains span residues 381–410 (ELNNFEEKNCIRCAACSYSCPMNLLPEQLY) and 420–449 (KTQIYNIQDCIECGICEQVCPSDIPLMSYY). Residues C390, C393, C396, C400, C429, C432, C435, and C439 each coordinate [4Fe-4S] cluster.

This sequence belongs to the 4Fe4S bacterial-type ferredoxin family. RnfC subfamily. In terms of assembly, the complex is composed of six subunits: RnfA, RnfB, RnfC, RnfD, RnfE and RnfG. The cofactor is [4Fe-4S] cluster.

The protein localises to the cell inner membrane. In terms of biological role, part of a membrane-bound complex that couples electron transfer with translocation of ions across the membrane. In Buchnera aphidicola subsp. Baizongia pistaciae (strain Bp), this protein is Ion-translocating oxidoreductase complex subunit C.